Reading from the N-terminus, the 398-residue chain is tRNA-specific 2-thiouridylase MnmA (398 aa).

Residues 18–25 (AMSGGVDS) and Leu-44 each bind ATP. The active-site Nucleophile is Cys-112. Cys-112 and Cys-213 are joined by a disulfide. Gly-136 provides a ligand contact to ATP. An interaction with tRNA region spans residues 163–165 (RDQ). Cys-213 acts as the Cysteine persulfide intermediate in catalysis.

This sequence belongs to the MnmA/TRMU family.

It localises to the cytoplasm. The enzyme catalyses S-sulfanyl-L-cysteinyl-[protein] + uridine(34) in tRNA + AH2 + ATP = 2-thiouridine(34) in tRNA + L-cysteinyl-[protein] + A + AMP + diphosphate + H(+). Functionally, catalyzes the 2-thiolation of uridine at the wobble position (U34) of tRNA, leading to the formation of s(2)U34. The polypeptide is tRNA-specific 2-thiouridylase MnmA (Rhizobium meliloti (strain 1021) (Ensifer meliloti)).